Consider the following 728-residue polypeptide: Polyribonucleotide nucleotidyltransferase (728 aa).

Residues aspartate 487 and aspartate 493 each contribute to the Mg(2+) site. The KH domain occupies 554-613 (PRIEVITVPTDKIREVIGTGGKVIREIVEKTGAKVDISDDGTIKVASSDGESIRKAIAWI). One can recognise an S1 motif domain in the interval 623-691 (GKIYEGTVVK…DRGKVRLSMK (69 aa)). Over residues 697–707 (TGEEIVYENEP) the composition is skewed to acidic residues. Residues 697-728 (TGEEIVYENEPAEQPREKREGGGGRGRRRERD) form a disordered region. A compositionally biased stretch (basic and acidic residues) spans 709-718 (EQPREKREGG).

It belongs to the polyribonucleotide nucleotidyltransferase family. Mg(2+) serves as cofactor.

The protein localises to the cytoplasm. It carries out the reaction RNA(n+1) + phosphate = RNA(n) + a ribonucleoside 5'-diphosphate. Involved in mRNA degradation. Catalyzes the phosphorolysis of single-stranded polyribonucleotides processively in the 3'- to 5'-direction. The protein is Polyribonucleotide nucleotidyltransferase of Parvibaculum lavamentivorans (strain DS-1 / DSM 13023 / NCIMB 13966).